The chain runs to 12345 residues: Muscle-specific protein 300 kDa (12345 aa).

Disordered stretches follow at residues methionine 1 to threonine 68 and tryptophan 121 to asparagine 152. The Cytoplasmic segment spans residues methionine 1–arginine 12295. The segment covering alanine 19–glycine 28 has biased composition (gly residues). Positions glutamate 45 to glutamine 60 are enriched in basic and acidic residues. The LRR 1 repeat unit spans residues phenylalanine 249–threonine 273. Disordered stretches follow at residues glutamate 295–aspartate 325, threonine 387–isoleucine 488, and glycine 504–alanine 526. Residues serine 299 to proline 321 are compositionally biased toward low complexity. Composition is skewed to polar residues over residues threonine 387–glutamine 404 and threonine 414–proline 434. Residues threonine 462–serine 484 are compositionally biased toward low complexity. The span at asparagine 511–aspartate 520 shows a compositional bias: acidic residues. 2 consecutive Calponin-homology (CH) domains span residues arginine 630–glutamine 737 and glutamine 777–proline 882. Residues leucine 823–serine 847 form an LRR 2 repeat. Residues serine 919–glutamine 952 form a TPR 1 repeat. LRR repeat units lie at residues cysteine 1089–glutamate 1112, histidine 1389–tryptophan 1411, and leucine 1616–arginine 1642. The stretch at leucine 1603–valine 1636 is one TPR 2 repeat. One copy of the HAT 1 repeat lies at threonine 1903–aspartate 1935. LRR repeat units lie at residues lysine 2087–alanine 2109 and glutamine 2558–alanine 2581. A Calponin-homology (CH) 3 domain is found at alanine 2109 to alanine 2233. The stretch at alanine 2663–leucine 2696 is one TPR 3 repeat. The disordered stretch occupies residues alanine 2699–leucine 2724. A compositionally biased stretch (basic and acidic residues) spans proline 2704–leucine 2724. 3 LRR repeats span residues lysine 2728–proline 2751, cysteine 2935–leucine 2959, and serine 3030–cysteine 3053. Residues glutamate 2894 to leucine 2962 are a coiled coil. A Spectrin 1 repeat occupies leucine 3110 to isoleucine 3207. The TPR 4 repeat unit spans residues lysine 3346–histidine 3379. LRR repeat units follow at residues lysine 3370–leucine 3393, leucine 3437–lysine 3462, leucine 3530–asparagine 3556, and asparagine 3611–lysine 3634. One copy of the Spectrin 2 repeat lies at lysine 3539 to alanine 3633. The TPR 5 repeat unit spans residues lysine 3629 to glutamate 3662. Residues lysine 3706 to serine 3739 form an HAT 2 repeat. An LRR 15 repeat occupies leucine 3748 to alanine 3771. A Spectrin 3 repeat occupies serine 4177 to lysine 4273. One copy of the TPR 6 repeat lies at glutamate 4360 to glutamine 4393. The stretch at alanine 4371 to arginine 4403 is one HAT 3 repeat. Residues phenylalanine 4611 to tyrosine 4701 form a Spectrin 4 repeat. LRR repeat units follow at residues asparagine 4654–lysine 4676 and glutamate 4742–glutamate 4763. One copy of the HAT 4 repeat lies at glutamate 4799–glutamine 4830. The Spectrin 5 repeat unit spans residues histidine 4820–glutamine 4919. The stretch at aspartate 4839–alanine 4863 is one LRR 18 repeat. The HAT 5 repeat unit spans residues alanine 4894–aspartate 4926. 2 LRR repeats span residues glutamine 5266–valine 5289 and serine 5333–histidine 5357. The TPR 7 repeat unit spans residues serine 5645–tyrosine 5678. 3 LRR repeats span residues serine 5761–arginine 5784, proline 5820–glycine 5843, and threonine 5979–histidine 6002. Residues glutamate 5791 to alanine 5895 form a Spectrin 6 repeat. The stretch at serine 6088–lysine 6120 is one HAT 6 repeat. 2 Spectrin repeats span residues arginine 6321 to lysine 6405 and alanine 6424 to glutamate 6530. 2 coiled-coil regions span residues methionine 6356 to leucine 6397 and arginine 6454 to lysine 6484. Residues tyrosine 6363–leucine 6387 form an LRR 24 repeat. One copy of the TPR 8 repeat lies at valine 6522 to isoleucine 6555. LRR repeat units follow at residues serine 6531–proline 6554 and leucine 6560–glutamate 6587. Positions leucine 6567–alanine 6597 form a coiled coil. The disordered stretch occupies residues glutamate 6631–glutamate 6657. A TPR 9 repeat occupies valine 6660–histidine 6695. An LRR 27 repeat occupies serine 7004–arginine 7026. The TPR 10 repeat unit spans residues glutamate 7161–lysine 7195. 4 LRR repeats span residues leucine 7219–arginine 7242, lysine 7300–proline 7318, glutamate 7319–alanine 7339, and histidine 7340–phenylalanine 7361. Residues lysine 7419 to methionine 7457 are a coiled coil. One copy of the LRR 32 repeat lies at serine 7524 to arginine 7547. The stretch at threonine 7644–arginine 7676 is one HAT 7 repeat. One copy of the TPR 11 repeat lies at lysine 7654–valine 7687. 3 LRR repeats span residues glutamine 7692 to glutamine 7714, glutamine 7752 to asparagine 7777, and leucine 7816 to phenylalanine 7840. A TPR 12 repeat occupies glutamate 7759–lysine 7792. Residues threonine 7799–glutamate 7935 adopt a coiled-coil conformation. One copy of the TPR 13 repeat lies at serine 7878–tyrosine 7911. LRR repeat units follow at residues lysine 8178–glutamine 8201, glutamate 8238–asparagine 8264, glutamate 8298–glutamate 8321, and aspartate 8354–glycine 8377. The stretch at glutamine 8431–tryptophan 8464 is one TPR 14 repeat. One copy of the LRR 40 repeat lies at glutamate 8534 to isoleucine 8557. 6 disordered regions span residues isoleucine 8583 to isoleucine 8616, glutamine 8966 to proline 9023, glutamate 9131 to alanine 9158, glycine 9361 to aspartate 9459, leucine 9502 to serine 9735, and threonine 9769 to leucine 9797. A compositionally biased stretch (polar residues) spans serine 8601 to methionine 8611. Residues threonine 8982–glutamate 9011 show a composition bias toward low complexity. A compositionally biased stretch (basic and acidic residues) spans serine 9136–glutamate 9151. Positions lysine 9394–aspartate 9404 are enriched in basic residues. Positions glutamate 9410–proline 9419 are enriched in acidic residues. The segment covering glutamate 9420–glutamate 9439 has biased composition (low complexity). The segment covering aspartate 9440–isoleucine 9451 has biased composition (basic and acidic residues). Composition is skewed to polar residues over residues alanine 9544–leucine 9563, isoleucine 9587–serine 9597, and glutamate 9605–lysine 9625. Positions threonine 9658–proline 9680 are enriched in low complexity. Positions glutamate 9681–threonine 9698 are enriched in basic and acidic residues. One copy of the LRR 41 repeat lies at serine 9699–proline 9721. Residues methionine 9711–serine 9735 show a composition bias toward polar residues. The segment covering lysine 9777–lysine 9788 has biased composition (basic residues). LRR repeat units lie at residues serine 9995–valine 10019, glutamate 10073–leucine 10096, lysine 10252–glutamine 10276, and arginine 10353–aspartate 10376. Coiled-coil stretches lie at residues serine 10072–glutamine 10099 and leucine 10172–isoleucine 10257. A TPR 15 repeat occupies glutamine 10231–leucine 10264. An HAT 8 repeat occupies isoleucine 10426–lysine 10458. LRR repeat units follow at residues glutamate 10512–aspartate 10535, glutamate 10570–leucine 10593, and alanine 10644–glutamine 10667. One copy of the TPR 16 repeat lies at valine 10854–valine 10888. One copy of the HAT 9 repeat lies at valine 10855–alanine 10887. LRR repeat units follow at residues aspartate 10907–leucine 10929 and alanine 11021–serine 11043. The stretch at leucine 11016–alanine 11046 forms a coiled coil. Residues aspartate 11070–serine 11104 form an HAT 10 repeat. A TPR 17 repeat occupies phenylalanine 11072–phenylalanine 11105. The LRR 51 repeat unit spans residues glutamate 11197–alanine 11222. 2 coiled-coil regions span residues leucine 11220–histidine 11247 and leucine 11281–leucine 11308. 5 LRR repeats span residues serine 11342–threonine 11365, leucine 11398–aspartate 11422, glutamate 11670–serine 11692, proline 11697–arginine 11720, and glutamate 11744–glutamine 11766. Residues lysine 11655 to isoleucine 11685 adopt a coiled-coil conformation. A coiled-coil region spans residues leucine 11776–arginine 11806. The HAT 11 repeat unit spans residues lysine 11804 to threonine 11836. 2 LRR repeats span residues aspartate 11959–histidine 11981 and serine 12198–lysine 12220. The tract at residues serine 12253–alanine 12272 is disordered. The span at alanine 12256 to threonine 12267 shows a compositional bias: low complexity. Residues alanine 12287–threonine 12345 form the KASH domain. A helical; Anchor for type IV membrane protein membrane pass occupies residues alanine 12296–histidine 12316. One copy of the LRR 59 repeat lies at glutamine 12301–methionine 12323. Residues glycine 12317–threonine 12345 lie on the Perinuclear space side of the membrane.

Belongs to the nesprin family. Core component of LINC complexes which are composed of inner nuclear membrane SUN domain-containing proteins coupled to outer nuclear membrane KASH domain-containing nesprins. Interacts with klar; this interaction allows the anchoring of the Msp300 nuclear ring structure to the nuclear envelope. Interacts with sls; this interaction mediates the recruitment of Msp300 to the Z-disks.

Its subcellular location is the nucleus membrane. The protein localises to the cytoplasm. The protein resides in the myofibril. It is found in the sarcomere. It localises to the z line. Its subcellular location is the cytoskeleton. The protein localises to the microtubule organizing center. The protein resides in the perinuclear region. Component of the LINC (LInker of Nucleoskeleton and Cytoskeleton) complex involved in the connection between the nuclear lamina and the cytoskeleton. Collaborates with Klar to promote even spacing of the myonuclei at the periphery of striated muscle fibers by mediating a tight association between a nuclear ring structure of Msp300 and the plus ends of a unique astral MT network. In addition, is essential for anchoring nuclei, mitochondria and endoplasmic reticulum (ER) structures to the Z-disks. In fat body cells, part of perinuclear non-centrosomal microtubule-organizing centers (ncMTOCs) which function to accommodate the organization of microtubule (MT) networks to control nuclear positioning and dynein motor-based retrograde endosomal trafficking. Functions as the primary organizer of the ncMTOC by recruiting Patronin, shot and msps to the organizing centre. Within the ncMTOC, Msp300 and shot anchors the ncMTOC at the nuclear surface and recruits the MT minus-end regulators Patronin and Nin for assembly, anchoring and/or stabilization of circumferential and radial MTs at the ncMTOCs. Patronin, and perhaps Nin, recruits msps to the ncMTOC for the gamma-tubulin-independent elongation of radial MTs. This Drosophila melanogaster (Fruit fly) protein is Muscle-specific protein 300 kDa.